The chain runs to 83 residues: Greglin (83 aa).

A phosphoserine mark is found at serine 8, serine 11, and serine 15. 4 disulfide bridges follow: cysteine 21–cysteine 55, cysteine 25–cysteine 48, cysteine 33–cysteine 69, and cysteine 53–cysteine 76.

Its function is as follows. Serine protease inhibitor. Inhibits porcine pancreatic elastase with a Ki of 58.3 nM, human neutrophil elastase with a Ki of 3.6 nM, cathepsin G with a Ki of 153.5 nM, chymotrypsin with a Ki of 26.7 nM and subtilisin with a Ki of 0.68 nM. Does not inhibit neutrophil protease 3 or pancreatic trypsin. This Schistocerca gregaria (Desert locust) protein is Greglin.